Reading from the N-terminus, the 381-residue chain is Chaperone protein DnaJ (381 aa).

In terms of domain architecture, J spans 5-70 (DYYEVLGCDR…QKRGAYDRYG (66 aa)). The CR-type zinc finger occupies 136 to 214 (GKTAQISIPT…CGGAGRVTRE (79 aa)). 8 residues coordinate Zn(2+): Cys149, Cys152, Cys166, Cys169, Cys188, Cys191, Cys202, and Cys205. 4 CXXCXGXG motif repeats span residues 149–156 (CEVCSGSG), 166–173 (CRTCNGAG), 188–195 (CPSCQGRG), and 202–209 (CPNCGGAG).

The protein belongs to the DnaJ family. Homodimer. Zn(2+) serves as cofactor.

Its subcellular location is the cytoplasm. Its function is as follows. Participates actively in the response to hyperosmotic and heat shock by preventing the aggregation of stress-denatured proteins and by disaggregating proteins, also in an autonomous, DnaK-independent fashion. Unfolded proteins bind initially to DnaJ; upon interaction with the DnaJ-bound protein, DnaK hydrolyzes its bound ATP, resulting in the formation of a stable complex. GrpE releases ADP from DnaK; ATP binding to DnaK triggers the release of the substrate protein, thus completing the reaction cycle. Several rounds of ATP-dependent interactions between DnaJ, DnaK and GrpE are required for fully efficient folding. Also involved, together with DnaK and GrpE, in the DNA replication of plasmids through activation of initiation proteins. The sequence is that of Chaperone protein DnaJ from Azorhizobium caulinodans (strain ATCC 43989 / DSM 5975 / JCM 20966 / LMG 6465 / NBRC 14845 / NCIMB 13405 / ORS 571).